We begin with the raw amino-acid sequence, 276 residues long: Cholesterol 25-hydroxylase-like protein 1, member 2 (276 aa).

The N-linked (GlcNAc...) asparagine glycan is linked to Asn30. The next 3 membrane-spanning stretches (helical) occupy residues 39–59, 90–110, and 126–146; these read LFPV…YLSC, GVTL…QWMW, and LVGG…IWHF. One can recognise a Fatty acid hydroxylase domain in the interval 134–265; the sequence is LLLFDLQYFI…FSHWDKMFGT (132 aa). The Histidine box-1 signature appears at 144 to 148; sequence WHFLH. Residues 159–163 carry the Histidine box-2 motif; sequence HAIHH. N-linked (GlcNAc...) asparagine glycosylation is present at Asn164. The next 2 helical transmembrane spans lie at 175–195 and 199–219; these read CLGG…PVLL and LLTT…DHCG. The short motif at 240–246 is the Histidine box-3 element; sequence KHDVHHQ.

The protein belongs to the sterol desaturase family. Fe cation serves as cofactor.

It is found in the endoplasmic reticulum membrane. Functionally, may catalyze the formation of 25-hydroxycholesterol from cholesterol. The sequence is that of Cholesterol 25-hydroxylase-like protein 1, member 2 from Danio rerio (Zebrafish).